A 140-amino-acid chain; its full sequence is FLYWCH family member 2 (140 aa).

Disordered stretches follow at residues 1–39 and 84–140; these read MPLP…PRKF and HPEA…GKSL. S21 carries the post-translational modification Phosphoserine. Residues 98–114 are compositionally biased toward basic and acidic residues; sequence PEQKRSRQDPGTDRTED. Low complexity predominate over residues 118–127; that stretch reads AAGPPEAAGE.

This is FLYWCH family member 2 (FLYWCH2) from Homo sapiens (Human).